The sequence spans 286 residues: Glycine--tRNA ligase alpha subunit (286 aa).

It belongs to the class-II aminoacyl-tRNA synthetase family. As to quaternary structure, tetramer of two alpha and two beta subunits.

It localises to the cytoplasm. The enzyme catalyses tRNA(Gly) + glycine + ATP = glycyl-tRNA(Gly) + AMP + diphosphate. The polypeptide is Glycine--tRNA ligase alpha subunit (Thermotoga petrophila (strain ATCC BAA-488 / DSM 13995 / JCM 10881 / RKU-1)).